Reading from the N-terminus, the 450-residue chain is Tubulin alpha-1 chain (450 aa).

Glutamine 11 contacts GTP. Lysine 40 bears the N6-acetyllysine mark. The GTP site is built by glutamate 71, serine 140, glycine 144, threonine 145, threonine 179, asparagine 206, and asparagine 228. Mg(2+) is bound at residue glutamate 71. Glutamate 254 is a catalytic residue.

It belongs to the tubulin family. As to quaternary structure, dimer of alpha and beta chains. A typical microtubule is a hollow water-filled tube with an outer diameter of 25 nm and an inner diameter of 15 nM. Alpha-beta heterodimers associate head-to-tail to form protofilaments running lengthwise along the microtubule wall with the beta-tubulin subunit facing the microtubule plus end conferring a structural polarity. Microtubules usually have 13 protofilaments but different protofilament numbers can be found in some organisms and specialized cells. Interacts with Ote. The cofactor is Mg(2+). In terms of processing, undergoes a tyrosination/detyrosination cycle, the cyclic removal and re-addition of a C-terminal tyrosine residue by the enzymes tubulin tyrosine carboxypeptidase (TTCP) and tubulin tyrosine ligase (TTL), respectively. Acetylation of alpha chains at Lys-40 stabilizes microtubules and affects affinity and processivity of microtubule motors. This modification has a role in multiple cellular functions, ranging from cell motility, cell cycle progression or cell differentiation to intracellular trafficking and signaling. During the early stages of oogenesis lky/Alpha-tubulin N-acetyltransferase 2 is the main acetyltransferase responsible for Lys-40 acetylation in germline cells while Atat/alpha-tubulin N-acetyltransferase 1 is the main acetyltransferase responsible for Lys-40 acetylation in somatic cells.

It localises to the cytoplasm. Its subcellular location is the cytoskeleton. The catalysed reaction is GTP + H2O = GDP + phosphate + H(+). Tubulin is the major constituent of microtubules, a cylinder consisting of laterally associated linear protofilaments composed of alpha- and beta-tubulin heterodimers. Microtubules grow by the addition of GTP-tubulin dimers to the microtubule end, where a stabilizing cap forms. Below the cap, tubulin dimers are in GDP-bound state, owing to GTPase activity of alpha-tubulin. The sequence is that of Tubulin alpha-1 chain (alphaTub84B) from Drosophila melanogaster (Fruit fly).